Reading from the N-terminus, the 282-residue chain is [PSI+] induction protein 2 (282 aa).

The helical transmembrane segment at 43 to 63 (IIAIVGIVLACILVIWLIGGL) threads the bilayer. 2 N-linked (GlcNAc...) asparagine glycosylation sites follow: N91 and N132. T141 carries the post-translational modification Phosphothreonine. Disordered regions lie at residues 153–183 (FDLEKQKEKTRKKQQKERNKEGRSPSRVAPL) and 246–282 (LQGNSYNTPSSNHRSPYPTENYQSYQGYKPNQSDRYY). Positions 253–282 (TPSSNHRSPYPTENYQSYQGYKPNQSDRYY) are enriched in polar residues. An N-linked (GlcNAc...) asparagine glycan is attached at N276.

Its subcellular location is the membrane. In terms of biological role, not known. Seems to be able to provoque the non-Mendelian trait [PIN(+)] which is required for the de novo appearance of the [PSI(+)] prion. This Saccharomyces cerevisiae (strain ATCC 204508 / S288c) (Baker's yeast) protein is [PSI+] induction protein 2 (PIN2).